Consider the following 92-residue polypeptide: Small ribosomal subunit protein uS19 (92 aa).

Belongs to the universal ribosomal protein uS19 family.

Its function is as follows. Protein S19 forms a complex with S13 that binds strongly to the 16S ribosomal RNA. The sequence is that of Small ribosomal subunit protein uS19 from Polaromonas naphthalenivorans (strain CJ2).